A 420-amino-acid chain; its full sequence is Serine/threonine transporter SstT (420 aa).

The next 9 helical transmembrane spans lie at 14–34 (IMIG…WTFI), 40–60 (LFVG…IIAS), 71–91 (YVGS…VVAV), 172–192 (ITTV…GLVF), 210–230 (LLLL…AIVF), 283–303 (IPLG…IMTL), 309–329 (LGMS…AVSA), 332–352 (ASGI…LFGI), and 356–376 (IAMQ…SIET).

It belongs to the dicarboxylate/amino acid:cation symporter (DAACS) (TC 2.A.23) family.

It localises to the cell membrane. The enzyme catalyses L-serine(in) + Na(+)(in) = L-serine(out) + Na(+)(out). It catalyses the reaction L-threonine(in) + Na(+)(in) = L-threonine(out) + Na(+)(out). Involved in the import of serine and threonine into the cell, with the concomitant import of sodium (symport system). The sequence is that of Serine/threonine transporter SstT from Enterococcus faecalis (strain ATCC 700802 / V583).